The following is a 242-amino-acid chain: Venom nerve growth factor 2 (242 aa).

The signal sequence occupies residues Met1 to Ala18. A propeptide spanning residues Ala19 to Arg125 is cleaved from the precursor. The interval Lys46–Leu69 is disordered. The span at Arg52–Asp66 shows a compositional bias: basic and acidic residues. Disulfide bonds link Cys139/Cys203, Cys181/Cys231, and Cys191/Cys233. A glycan (N-linked (GlcNAc...) asparagine) is linked at Asn147.

Belongs to the NGF-beta family. In terms of assembly, homodimer; non-covalently linked. Expressed by the venom gland.

The protein localises to the secreted. Nerve growth factor is important for the development and maintenance of the sympathetic and sensory nervous systems. It stimulates division and differentiation of sympathetic and embryonic sensory neurons as well as basal forebrain cholinergic neurons in the brain. Its relevance in the snake venom is not clear. However, it has been shown to inhibit metalloproteinase-dependent proteolysis of platelet glycoprotein Ib alpha, suggesting a metalloproteinase inhibition to prevent metalloprotease autodigestion and/or protection against prey proteases. Binds a lipid between the two protein chains in the homodimer. The lipid-bound form promotes histamine relase from mouse mast cells, contrary to the lipid-free form. In Demansia vestigiata (Lesser black whip snake), this protein is Venom nerve growth factor 2.